The sequence spans 2240 residues: Nonribisomal peptide synthetase notE (2240 aa).

A disordered region spans residues 22 to 52 (TETMRETLSSSSSPLSLSSITSPLSSASEPP). Low complexity predominate over residues 28 to 52 (TLSSSSSPLSLSSITSPLSSASEPP). The adenylation 1 stretch occupies residues 85 to 484 (QQRCREAPES…GRKEGQVKIR (400 aa)). A Carrier 1 domain is found at 616-692 (PPTTATEHAL…EQARKATPVS (77 aa)). Residue S653 is modified to O-(pantetheine 4'-phosphoryl)serine. The interval 732–1144 (EDIFPCTPLQ…DFASPQDRDL (413 aa)) is condensation 1. Positions 1167-1564 (QEARQPSREA…GRRDTQLKLR (398 aa)) are adenylation 2. The 77-residue stretch at 1700-1776 (PVSRGPELRL…ELARCTGEEP (77 aa)) folds into the Carrier 2 domain. An O-(pantetheine 4'-phosphoryl)serine modification is found at S1737. Positions 1845–2159 (FSFHGEVSVE…ILQHQNIDMD (315 aa)) are condensation 2. The interval 2008–2027 (CTMPVKATPPTDSDDSRPSA) is disordered.

It belongs to the NRP synthetase family.

It catalyses the reaction L-proline + L-tryptophan + 2 ATP = brevianamide F + 2 AMP + 2 diphosphate + 2 H(+). Its pathway is alkaloid biosynthesis. Nonribisomal peptide synthetase; part of the gene cluster that mediates the biosynthesis of notoamide, a fungal indole alkaloid that belongs to a family of natural products containing a characteristic bicyclo[2.2.2]diazaoctane core. The first step of notoamide biosynthesis involves coupling of L-proline and L-tryptophan by the bimodular NRPS notE, to produce cyclo-L-tryptophan-L-proline called brevianamide F. The reverse prenyltransferase notF then acts as a deoxybrevianamide E synthase and converts brevianamide F to deoxybrevianamide E via reverse prenylation at C-2 of the indole ring leading to the bicyclo[2.2.2]diazaoctane core. Deoxybrevianamide E is further hydroxylated at C-6 of the indole ring, likely catalyzed by the cytochrome P450 monooxygenase notG, to yield 6-hydroxy-deoxybrevianamide E. 6-hydroxy-deoxybrevianamide E is a specific substrate of the prenyltransferase notC for normal prenylation at C-7 to produce 6-hydroxy-7-prenyl-deoxybrevianamide, also called notoamide S. As the proposed pivotal branching point in notoamide biosynthesis, notoamide S can be diverted to notoamide E through an oxidative pyran ring closure putatively catalyzed by either notH cytochrome P450 monooxygenase or the notD FAD-linked oxidoreductase. This step would be followed by an indole 2,3-epoxidation-initiated pinacol-like rearrangement catalyzed by the notB FAD-dependent monooxygenase leading to the formation of notoamide C and notoamide D. On the other hand notoamide S is converted to notoamide T by notH (or notD), a bifunctional oxidase that also functions as the intramolecular Diels-Alderase responsible for generation of (+)-notoamide T. To generate antipodal (-)-notoaminide T, notH' (or notD') in Aspergillus versicolor is expected to catalyze a Diels-Alder reaction leading to the opposite stereochemistry. The remaining oxidoreductase notD (or notH) likely catalyzes the oxidative pyran ring formation to yield (+)-stephacidin A. The FAD-dependent monooxygenase notI is highly similar to notB and is predicted to catalyze a similar conversion from (+)-stephacidin A to (-)-notoamide B via the 2,3-epoxidation of (+)-stephacidin A followed by a pinacol-type rearrangement. Finally, it remains unclear which enzyme could be responsible for the final hydroxylation steps leading to notoamide A and sclerotiamide. The chain is Nonribisomal peptide synthetase notE from Aspergillus sp. (strain MF297-2).